Reading from the N-terminus, the 360-residue chain is Molybdenum import ATP-binding protein ModC (360 aa).

Residues 5-234 (VKLHLGYQDF…LDLPLALGDD (230 aa)) form the ABC transporter domain. Residue 32-39 (GHSGSGKT) coordinates ATP. Positions 295-360 (HSSILNRLPV…AQIKAVAVLA (66 aa)) constitute a Mop domain.

The protein belongs to the ABC transporter superfamily. Molybdate importer (TC 3.A.1.8) family. The complex is composed of two ATP-binding proteins (ModC), two transmembrane proteins (ModB) and a solute-binding protein (ModA).

The protein resides in the cell inner membrane. The enzyme catalyses molybdate(out) + ATP + H2O = molybdate(in) + ADP + phosphate + H(+). Functionally, part of the ABC transporter complex ModABC involved in molybdenum import. Responsible for energy coupling to the transport system. The chain is Molybdenum import ATP-binding protein ModC from Pseudomonas fluorescens (strain ATCC BAA-477 / NRRL B-23932 / Pf-5).